Here is a 1134-residue protein sequence, read N- to C-terminus: Phospholipid-transporting ATPase IH (1134 aa).

The Cytoplasmic portion of the chain corresponds to 1–61 (MDCSLVRTLV…SSKYTFWNFI (61 aa)). A helical transmembrane segment spans residues 62–82 (PKNLFEQFRRVANFYFLIIFL). Residues 83–88 (VQLIID) lie on the Extracellular side of the membrane. A helical membrane pass occupies residues 89-110 (TPTSPVTSGLPLFFVITVTAIK). Topologically, residues 111 to 296 (QGYEDWLRHK…SAVEKSMNAF (186 aa)) are cytoplasmic. The chain crosses the membrane as a helical span at residues 297–318 (LIVYLCILISKALINTVLKYMW). The Extracellular portion of the chain corresponds to 319-349 (QSEPFRDEPWYNQKTESERQRNLFLKAFTDF). A helical transmembrane segment spans residues 350–372 (LAFMVLFNYIIPVSMYVTVEMQK). Residues 373 to 881 (FLGSYFITWD…GHFYYIRISE (509 aa)) lie on the Cytoplasmic side of the membrane. Aspartate 414 functions as the 4-aspartylphosphate intermediate in the catalytic mechanism. ATP-binding residues include aspartate 414, lysine 415, threonine 416, glutamate 511, phenylalanine 553, lysine 576, arginine 607, threonine 687, glycine 688, and aspartate 689. Aspartate 414 serves as a coordination point for Mg(2+). Mg(2+) is bound at residue threonine 416. Serine 738 is modified (phosphoserine). Residues arginine 798 and lysine 804 each contribute to the ATP site. Position 825 (aspartate 825) interacts with Mg(2+). ATP contacts are provided by asparagine 828 and aspartate 829. Aspartate 829 contacts Mg(2+). The chain crosses the membrane as a helical span at residues 882 to 902 (LVQYFFYKNVCFIFPQFLYQF). At 903-914 (FCGFSQQTLYDT) the chain is on the extracellular side. Residues 915-934 (AYLTLYNISFTSLPILLYSL) traverse the membrane as a helical segment. The Cytoplasmic portion of the chain corresponds to 935–964 (MEQHVGIDVLKRDPTLYRDVAKNALLRWRV). Residues 965 to 986 (FIYWTLLGLFDALVFFFGAYFV) form a helical membrane-spanning segment. Over 987-1000 (FENTTVTSNGQIFG) the chain is Extracellular. The helical transmembrane segment at 1001-1023 (NWTFGTLVFTVMVFTVTLKLALD) threads the bilayer. Topologically, residues 1024-1029 (THYWTW) are cytoplasmic. The chain crosses the membrane as a helical span at residues 1030–1050 (INHFVIWGSLLFYVVFSLLWG). The Extracellular segment spans residues 1051–1068 (GVIWPFLNYQRMYYVFIQ). A helical transmembrane segment spans residues 1069 to 1093 (MLSSGPAWLAIVLLVTISLLPDVLK). At 1094–1134 (KVLCRQLWPTATERVQTKSQCLSVEQSTIFMLSQTSSSLSF) the chain is on the cytoplasmic side.

This sequence belongs to the cation transport ATPase (P-type) (TC 3.A.3) family. Type IV subfamily. As to quaternary structure, component of a P4-ATPase flippase complex which consists of a catalytic alpha subunit ATP11A and an accessory beta subunit TMEM30A. Mg(2+) is required as a cofactor. Post-translationally, proteolytically cleaved by CASP3. In terms of tissue distribution, widely expressed. Expressed in myoblasts.

The protein resides in the cell membrane. The protein localises to the early endosome. It localises to the recycling endosome. It is found in the endoplasmic reticulum membrane. It carries out the reaction ATP + H2O + phospholipidSide 1 = ADP + phosphate + phospholipidSide 2.. It catalyses the reaction a 1,2-diacyl-sn-glycero-3-phospho-L-serine(out) + ATP + H2O = a 1,2-diacyl-sn-glycero-3-phospho-L-serine(in) + ADP + phosphate + H(+). The enzyme catalyses a 1,2-diacyl-sn-glycero-3-phosphoethanolamine(out) + ATP + H2O = a 1,2-diacyl-sn-glycero-3-phosphoethanolamine(in) + ADP + phosphate + H(+). Its activity is regulated as follows. The flippase activity is inactivated by caspase-mediated cleavage in apoptotic cells, allowing for PS exposure on the cell surface and engulfment of apoptotic cells by macrophages. The ATPase activity is up-regulated by aminophospholipids PS and PE and down-regulated by increasing intracellular Ca2+ levels. In terms of biological role, catalytic component of a P4-ATPase flippase complex which catalyzes the hydrolysis of ATP coupled to the transport of aminophospholipids, phosphatidylserines (PS) and phosphatidylethanolamines (PE), from the outer to the inner leaflet of the plasma membrane. Does not show flippase activity toward phosphatidylcholine (PC). Contributes to the maintenance of membrane lipid asymmetry with a specific role in morphogenesis of muscle cells. In myoblasts, mediates PS enrichment at the inner leaflet of plasma membrane, triggering PIEZO1-dependent Ca2+ influx and Rho GTPases signal transduction, subsequently leading to the assembly of cortical actomyosin fibers and myotube formation. May be involved in the uptake of farnesyltransferase inhibitor drugs, such as lonafarnib. The chain is Phospholipid-transporting ATPase IH (ATP11A) from Homo sapiens (Human).